The primary structure comprises 295 residues: Acetylglutamate kinase (295 aa).

Residues 66 to 67 (GG), R88, and N193 each bind substrate.

Belongs to the acetylglutamate kinase family. ArgB subfamily.

The protein localises to the cytoplasm. It catalyses the reaction N-acetyl-L-glutamate + ATP = N-acetyl-L-glutamyl 5-phosphate + ADP. It participates in amino-acid biosynthesis; L-arginine biosynthesis; N(2)-acetyl-L-ornithine from L-glutamate: step 2/4. Catalyzes the ATP-dependent phosphorylation of N-acetyl-L-glutamate. The protein is Acetylglutamate kinase of Sinorhizobium fredii (strain NBRC 101917 / NGR234).